Here is a 488-residue protein sequence, read N- to C-terminus: Patatin-like protein 7 (488 aa).

A disordered region spans residues 23 to 49; the sequence is QRGGDGATAASKSANDYNNNDSLLTDM. Residues 32 to 47 show a composition bias toward polar residues; it reads ASKSANDYNNNDSLLT. Residues 101-301 form the PNPLA domain; that stretch reads LSIDGGGMRG…AMSNPTAAAI (201 aa). The GXGXXG signature appears at 105–110; that stretch reads GGGMRG. Catalysis depends on Ser145, which acts as the Nucleophile.

It belongs to the patatin family. In terms of tissue distribution, highly expressed in roots and at lower levels in leaves, stems, flowers and siliques.

The protein resides in the cell membrane. Its function is as follows. Possesses non-specific lipolytic acyl hydrolase (LAH) activity. Catalyzes the hydrolysis of the galactolipids monogalactosyldiacylglycerol (MGDG) and digalactosyldiacylglycerol (DGDG), and the phoshpolipids phosphatidylcholine (PC), phosphatidylethanolamine (PE), phosphatidylglycerol (PG), phosphatidic acid (PA), phosphatidylserine (PS). Favors the release of fatty acid at the sn-2 position for PC. Possesses acyl-CoA thioesterase activity. Negatively affects disease resistance to the necrotic fungal pathogen Botrytis cinerea and the avirulent bacteria Pseudomonas syringae by promoting cell death and reducing the efficiency of the hypersensitive response, respectively. However, PLP2 contributes to resistance to cucumber mosaic virus (CMV), an obligate parasite inducing hypersensitive response. May negatively regulate oxylipin production, possibly via participating in membrane repair that includes removal of oxidatively modified lipids. Enzymatic products of PLP2 may influence cellulose content and cell elongation. This is Patatin-like protein 7 (PLP7) from Arabidopsis thaliana (Mouse-ear cress).